The sequence spans 98 residues: Small ribosomal subunit protein uS19 (98 aa).

The disordered stretch occupies residues T77–K98.

This sequence belongs to the universal ribosomal protein uS19 family.

Functionally, protein S19 forms a complex with S13 that binds strongly to the 16S ribosomal RNA. The sequence is that of Small ribosomal subunit protein uS19 from Chlorobium phaeobacteroides (strain BS1).